We begin with the raw amino-acid sequence, 759 residues long: Spindle pole body component alp16 (759 aa).

In terms of assembly, interacts with gamma-tubulin.

It is found in the cytoplasm. Its subcellular location is the cytoskeleton. The protein localises to the microtubule organizing center. It localises to the spindle pole body. Functionally, component of the gamma tubule complex that is required for the regulation of both interphase microtubules and mitotic bipolar spindles. The protein is Spindle pole body component alp16 (alp16) of Schizosaccharomyces pombe (strain 972 / ATCC 24843) (Fission yeast).